Consider the following 434-residue polypeptide: uncharacterized protein (434 aa).

Residues 4–62 (LLTIHTQVEGEITALAFGGAGILRYHGFVIFVPFTAPGDQIICRIIEIKKSFAVAELVK) enclose the TRAM domain. Residues C75, C81, C84, and C161 each coordinate [4Fe-4S] cluster. Q266, Y295, E316, and N364 together coordinate S-adenosyl-L-methionine. C391 acts as the Nucleophile in catalysis.

The protein belongs to the class I-like SAM-binding methyltransferase superfamily. RNA M5U methyltransferase family.

This is an uncharacterized protein from Protochlamydia amoebophila (strain UWE25).